Consider the following 390-residue polypeptide: Phosphopentomutase (390 aa).

Residues aspartate 14, aspartate 286, histidine 291, aspartate 327, histidine 328, and histidine 339 each coordinate Mn(2+).

This sequence belongs to the phosphopentomutase family. Mn(2+) serves as cofactor.

The protein resides in the cytoplasm. It carries out the reaction 2-deoxy-alpha-D-ribose 1-phosphate = 2-deoxy-D-ribose 5-phosphate. The catalysed reaction is alpha-D-ribose 1-phosphate = D-ribose 5-phosphate. The protein operates within carbohydrate degradation; 2-deoxy-D-ribose 1-phosphate degradation; D-glyceraldehyde 3-phosphate and acetaldehyde from 2-deoxy-alpha-D-ribose 1-phosphate: step 1/2. In terms of biological role, isomerase that catalyzes the conversion of deoxy-ribose 1-phosphate (dRib-1-P) and ribose 1-phosphate (Rib-1-P) to deoxy-ribose 5-phosphate (dRib-5-P) and ribose 5-phosphate (Rib-5-P), respectively. The sequence is that of Phosphopentomutase from Exiguobacterium sibiricum (strain DSM 17290 / CCUG 55495 / CIP 109462 / JCM 13490 / 255-15).